Here is a 334-residue protein sequence, read N- to C-terminus: Malate dehydrogenase (334 aa).

Residue 16-22 (GAAGQIA) coordinates NAD(+). Residues arginine 97 and arginine 103 each contribute to the substrate site. NAD(+) is bound by residues asparagine 110, glutamine 117, and 134 to 136 (VGN). Residues asparagine 136 and arginine 167 each contribute to the substrate site. Histidine 192 functions as the Proton acceptor in the catalytic mechanism.

The protein belongs to the LDH/MDH superfamily. MDH type 2 family.

It catalyses the reaction (S)-malate + NAD(+) = oxaloacetate + NADH + H(+). Catalyzes the reversible oxidation of malate to oxaloacetate. This is Malate dehydrogenase from Nocardia farcinica (strain IFM 10152).